A 60-amino-acid chain; its full sequence is Small ribosomal subunit protein bS21 (60 aa).

The tract at residues 35–60 is disordered; sequence REHYEKPSVKRKKKSEAARRRKSKVR. A compositionally biased stretch (basic residues) spans 43 to 60; it reads VKRKKKSEAARRRKSKVR.

This sequence belongs to the bacterial ribosomal protein bS21 family.

In Clostridium novyi (strain NT), this protein is Small ribosomal subunit protein bS21.